The following is a 200-amino-acid chain: 2-phospho-L-lactate guanylyltransferase (200 aa).

It belongs to the CofC family. Homodimer.

It carries out the reaction (2S)-2-phospholactate + GTP + H(+) = (2S)-lactyl-2-diphospho-5'-guanosine + diphosphate. Its pathway is cofactor biosynthesis; coenzyme F420 biosynthesis. Functionally, guanylyltransferase that catalyzes the activation of (2S)-2-phospholactate (2-PL) as (2S)-lactyl-2-diphospho-5'-guanosine, via the condensation of 2-PL with GTP. It is involved in the biosynthesis of coenzyme F420, a hydride carrier cofactor. The sequence is that of 2-phospho-L-lactate guanylyltransferase from Ferroglobus placidus (strain DSM 10642 / AEDII12DO).